The following is a 158-amino-acid chain: Transcription elongation factor GreA (158 aa).

This sequence belongs to the GreA/GreB family.

Its function is as follows. Necessary for efficient RNA polymerase transcription elongation past template-encoded arresting sites. The arresting sites in DNA have the property of trapping a certain fraction of elongating RNA polymerases that pass through, resulting in locked ternary complexes. Cleavage of the nascent transcript by cleavage factors such as GreA or GreB allows the resumption of elongation from the new 3'terminus. GreA releases sequences of 2 to 3 nucleotides. This chain is Transcription elongation factor GreA, found in Rhizobium etli (strain CIAT 652).